A 277-amino-acid polypeptide reads, in one-letter code: MDSAVDRHVFYISDGTAITAEVLGHAVMSQFPVTISSITLPFVENESRARAVKDQIDAIYHQTGVRPLVFYSIVLPEIRAIILQSEGFCQDIVQALVAPLQQEMKLDPTPIAHRTHGLTPGNLNKYDARIAAIDYTLAHDDGISLRNLDQAQVILLGVSRCGKTPTSLYLAMQFGIRAANYPFIADDMDNLVLPASLKPLQHKLFGLTINPERLAAIREERRENSRYASLRQCRMEVAEVEALYRKNQIPWINSTNYSVEEIATKILDIMGLNRRMY.

An ADP-binding site is contributed by 157–164 (GVSRCGKT).

This sequence belongs to the pyruvate, phosphate/water dikinase regulatory protein family. PSRP subfamily.

It catalyses the reaction [pyruvate, water dikinase] + ADP = [pyruvate, water dikinase]-phosphate + AMP + H(+). The enzyme catalyses [pyruvate, water dikinase]-phosphate + phosphate + H(+) = [pyruvate, water dikinase] + diphosphate. Its function is as follows. Bifunctional serine/threonine kinase and phosphorylase involved in the regulation of the phosphoenolpyruvate synthase (PEPS) by catalyzing its phosphorylation/dephosphorylation. The chain is Phosphoenolpyruvate synthase regulatory protein from Escherichia fergusonii (strain ATCC 35469 / DSM 13698 / CCUG 18766 / IAM 14443 / JCM 21226 / LMG 7866 / NBRC 102419 / NCTC 12128 / CDC 0568-73).